A 247-amino-acid chain; its full sequence is ATP synthase subunit a, chloroplastic (247 aa).

The next 5 membrane-spanning stretches (helical) occupy residues 38–58 (QVLITSWVVIAILLGSVTVAV), 95–115 (VPFIGTMFLFIFVSNWSGALL), 134–154 (INTTVALALPTSVAYFYAGLT), 199–219 (LVVVVLVSLVPLVVPIPVMFL), and 220–240 (GLFTSGIQALIFATLAAAYIG).

The protein belongs to the ATPase A chain family. F-type ATPases have 2 components, CF(1) - the catalytic core - and CF(0) - the membrane proton channel. CF(1) has five subunits: alpha(3), beta(3), gamma(1), delta(1), epsilon(1). CF(0) has four main subunits: a, b, b' and c.

The protein localises to the plastid. The protein resides in the chloroplast thylakoid membrane. Key component of the proton channel; it plays a direct role in the translocation of protons across the membrane. This is ATP synthase subunit a, chloroplastic from Acorus calamus var. americanus (American sweet flag).